A 547-amino-acid chain; its full sequence is Putative nitric oxide synthase (547 aa).

The segment covering 24–40 (QLAPNPSSFSPTRAAST) has biased composition (low complexity). Disordered stretches follow at residues 24–57 (QLAP…SRGD) and 72–91 (VLAP…RKAL). Residues 81-91 (RRRRREKRKAL) are compositionally biased toward basic residues. The region spanning 167–343 (ADQLRDKLSY…LYDTPGVHLH (177 aa)) is the CP-type G domain.

The protein belongs to the TRAFAC class YlqF/YawG GTPase family. NOA1 subfamily.

It carries out the reaction 2 L-arginine + 3 NADPH + 4 O2 + H(+) = 2 L-citrulline + 2 nitric oxide + 3 NADP(+) + 4 H2O. In terms of biological role, produces nitric oxide (NO) which is a messenger molecule involved in hormonal signaling and defense responses in plant. The sequence is that of Putative nitric oxide synthase from Oryza sativa subsp. japonica (Rice).